The following is a 432-amino-acid chain: Gamma-glutamyl phosphate reductase (432 aa).

The protein belongs to the gamma-glutamyl phosphate reductase family.

The protein localises to the cytoplasm. It catalyses the reaction L-glutamate 5-semialdehyde + phosphate + NADP(+) = L-glutamyl 5-phosphate + NADPH + H(+). Its pathway is amino-acid biosynthesis; L-proline biosynthesis; L-glutamate 5-semialdehyde from L-glutamate: step 2/2. In terms of biological role, catalyzes the NADPH-dependent reduction of L-glutamate 5-phosphate into L-glutamate 5-semialdehyde and phosphate. The product spontaneously undergoes cyclization to form 1-pyrroline-5-carboxylate. The protein is Gamma-glutamyl phosphate reductase of Ruminiclostridium cellulolyticum (strain ATCC 35319 / DSM 5812 / JCM 6584 / H10) (Clostridium cellulolyticum).